Consider the following 446-residue polypeptide: Sensor-type histidine kinase PrrB (446 aa).

A run of 2 helical transmembrane segments spans residues 19–39 (VVATAIGAAIPVLIVGTVVWV) and 151–171 (LLICGFAIAAAAVFAWLLAAF). The HAMP domain occupies 172 to 222 (AVRPFKQLAQQTRSVDAGGEAPRVEVHGATEAVEIAEAMRGMLQRIWNEQN). The Histidine kinase domain maps to 237–446 (VSSHELRTPL…RLLLRISAPS (210 aa)). A Phosphohistidine; by autocatalysis modification is found at histidine 240.

Post-translationally, autophosphorylated.

The protein localises to the cell membrane. The catalysed reaction is ATP + protein L-histidine = ADP + protein N-phospho-L-histidine.. In terms of biological role, member of the two-component regulatory system PrrB/PrrA that is involved specifically in early intracellular multiplication of Mycobacterium and is essential for its viability. Functions as a sensor protein kinase which is autophosphorylated at a histidine residue and transfers its phosphate group to the conserved aspartic acid residue in the regulatory domain of PrrA. In turn, PrrA binds to the upstream promoter regions of target genes including itself to positively regulate their expression. The protein is Sensor-type histidine kinase PrrB (prrB) of Mycobacterium leprae (strain TN).